The primary structure comprises 202 residues: MSHIAVERNRRRQMNEHLKSLRSLTPCFYIKRGDQASIIGGVIEFIKELQQLVQVLESKKRRKTLNRPSFPYDHQTIEPSSLGAATTRVPFSRIENVMTTSTFKEVGACCNSPHANVEAKISGSNVVLRVVSRRIVGQLVKIISVLEKLSFQVLHLNISSMEETVLYFFVVKIGLECHLSLEELTLEVQKSFVSDEVIVSTN.

One can recognise a bHLH domain in the interval 1 to 49 (MSHIAVERNRRRQMNEHLKSLRSLTPCFYIKRGDQASIIGGVIEFIKEL).

In terms of assembly, homodimer. Leaf epidermis and flowers.

It is found in the nucleus. Transcription factor. Together with FMA and SPCH, regulates the stomata formation. Required for the differentiation of stomatal guard cells, by promoting successive asymmetric cell divisions and the formation of guard mother cells. Promotes the conversion of the leaf epidermis into stomata. The chain is Transcription factor MUTE (MUTE) from Arabidopsis thaliana (Mouse-ear cress).